We begin with the raw amino-acid sequence, 506 residues long: Lysine--tRNA ligase (506 aa).

Residues Glu415 and Glu422 each contribute to the Mg(2+) site.

The protein belongs to the class-II aminoacyl-tRNA synthetase family. As to quaternary structure, homodimer. The cofactor is Mg(2+).

Its subcellular location is the cytoplasm. The catalysed reaction is tRNA(Lys) + L-lysine + ATP = L-lysyl-tRNA(Lys) + AMP + diphosphate. This Erwinia tasmaniensis (strain DSM 17950 / CFBP 7177 / CIP 109463 / NCPPB 4357 / Et1/99) protein is Lysine--tRNA ligase.